The chain runs to 235 residues: MRLKILIKLSGAGMSADSSEPFSNQFLETVIAQLKQLVPNYQIGIVIGGGNIMRGKSCSDYNITEIAGHHLGIMATVINGAFLKAKFDSHKLNSTLLSAVSCPSLATHIVSQTTIDDAFKNHDIVIFAGGTGNPYFSTDTAVALRATQMQADIILIGKNGVDGVYTADPKKDKHAKFLASLTYAEAIKNDLQIMDITAFTMCKENNLKVIIFNINAEHAIIKALSKQGKYTLIEK.

ATP is bound at residue 8–11; that stretch reads KLSG. Position 49 (Gly-49) interacts with UMP. Residues Gly-50 and Arg-54 each contribute to the ATP site. 131–138 is a UMP binding site; the sequence is TGNPYFST. ATP-binding residues include Asn-159, Tyr-165, and Asp-168.

The protein belongs to the UMP kinase family. As to quaternary structure, homohexamer.

It localises to the cytoplasm. The catalysed reaction is UMP + ATP = UDP + ADP. The protein operates within pyrimidine metabolism; CTP biosynthesis via de novo pathway; UDP from UMP (UMPK route): step 1/1. Its activity is regulated as follows. Inhibited by UTP. In terms of biological role, catalyzes the reversible phosphorylation of UMP to UDP. The polypeptide is Uridylate kinase (Mycoplasma pneumoniae (strain ATCC 29342 / M129 / Subtype 1) (Mycoplasmoides pneumoniae)).